The primary structure comprises 445 residues: tRNA modification GTPase MnmE (445 aa).

Positions 20, 79, and 119 each coordinate (6S)-5-formyl-5,6,7,8-tetrahydrofolate. Residues 215–371 (GLKLAIIGPP…ILKNIENIAE (157 aa)) enclose the TrmE-type G domain. Residue Asn225 participates in K(+) binding. GTP is bound by residues 225–230 (NTGKSS), 244–250 (SNIAGTT), and 269–272 (DTAG). Mg(2+) is bound at residue Ser229. 3 residues coordinate K(+): Ser244, Ile246, and Thr249. Residue Thr250 participates in Mg(2+) binding. Lys445 provides a ligand contact to (6S)-5-formyl-5,6,7,8-tetrahydrofolate.

Belongs to the TRAFAC class TrmE-Era-EngA-EngB-Septin-like GTPase superfamily. TrmE GTPase family. As to quaternary structure, homodimer. Heterotetramer of two MnmE and two MnmG subunits. Requires K(+) as cofactor.

It localises to the cytoplasm. Its function is as follows. Exhibits a very high intrinsic GTPase hydrolysis rate. Involved in the addition of a carboxymethylaminomethyl (cmnm) group at the wobble position (U34) of certain tRNAs, forming tRNA-cmnm(5)s(2)U34. The chain is tRNA modification GTPase MnmE from Rickettsia prowazekii (strain Madrid E).